The following is a 412-amino-acid chain: Na(+)-translocating NADH-quinone reductase subunit B (412 aa).

The next 3 membrane-spanning stretches (helical) occupy residues 57–77 (MILV…NVGL), 127–147 (VFFL…EVLF), and 163–183 (SILF…ALGI). Threonine 236 bears the FMN phosphoryl threonine mark. 5 helical membrane passes run 270–290 (GSIG…ILFG), 297–317 (IVAG…VIGS), 322–342 (MFAM…GMMF), 358–378 (WSYG…NPAY), and 381–401 (GMML…YLVV).

It belongs to the NqrB/RnfD family. Composed of six subunits; NqrA, NqrB, NqrC, NqrD, NqrE and NqrF. The cofactor is FMN.

The protein resides in the cell inner membrane. It carries out the reaction a ubiquinone + n Na(+)(in) + NADH + H(+) = a ubiquinol + n Na(+)(out) + NAD(+). NQR complex catalyzes the reduction of ubiquinone-1 to ubiquinol by two successive reactions, coupled with the transport of Na(+) ions from the cytoplasm to the periplasm. NqrA to NqrE are probably involved in the second step, the conversion of ubisemiquinone to ubiquinol. The sequence is that of Na(+)-translocating NADH-quinone reductase subunit B from Klebsiella pneumoniae subsp. pneumoniae (strain ATCC 700721 / MGH 78578).